We begin with the raw amino-acid sequence, 388 residues long: Carbamoyl phosphate synthase small chain (388 aa).

The tract at residues 1–198 (MSQDLLPGVT…WPEGYAKLDK (198 aa)) is CPSase. Residues Ser53, Gly250, and Gly252 each coordinate L-glutamine. The Glutamine amidotransferase type-1 domain occupies 202-388 (EVVVIDYGVK…RFAGLMDAAK (187 aa)). Cys279 functions as the Nucleophile in the catalytic mechanism. The L-glutamine site is built by Leu280, Gln283, Asn321, Gly323, and Phe324. Catalysis depends on residues His363 and Glu365.

Belongs to the CarA family. In terms of assembly, composed of two chains; the small (or glutamine) chain promotes the hydrolysis of glutamine to ammonia, which is used by the large (or ammonia) chain to synthesize carbamoyl phosphate. Tetramer of heterodimers (alpha,beta)4.

It carries out the reaction hydrogencarbonate + L-glutamine + 2 ATP + H2O = carbamoyl phosphate + L-glutamate + 2 ADP + phosphate + 2 H(+). It catalyses the reaction L-glutamine + H2O = L-glutamate + NH4(+). Its pathway is amino-acid biosynthesis; L-arginine biosynthesis; carbamoyl phosphate from bicarbonate: step 1/1. It participates in pyrimidine metabolism; UMP biosynthesis via de novo pathway; (S)-dihydroorotate from bicarbonate: step 1/3. Its function is as follows. Small subunit of the glutamine-dependent carbamoyl phosphate synthetase (CPSase). CPSase catalyzes the formation of carbamoyl phosphate from the ammonia moiety of glutamine, carbonate, and phosphate donated by ATP, constituting the first step of 2 biosynthetic pathways, one leading to arginine and/or urea and the other to pyrimidine nucleotides. The small subunit (glutamine amidotransferase) binds and cleaves glutamine to supply the large subunit with the substrate ammonia. This is Carbamoyl phosphate synthase small chain from Caulobacter vibrioides (strain ATCC 19089 / CIP 103742 / CB 15) (Caulobacter crescentus).